The sequence spans 301 residues: Acetylglutamate kinase (301 aa).

Substrate-binding positions include 68–69, Arg90, and Asn195; that span reads GG.

This sequence belongs to the acetylglutamate kinase family. ArgB subfamily.

It localises to the cytoplasm. It carries out the reaction N-acetyl-L-glutamate + ATP = N-acetyl-L-glutamyl 5-phosphate + ADP. Its pathway is amino-acid biosynthesis; L-arginine biosynthesis; N(2)-acetyl-L-ornithine from L-glutamate: step 2/4. In terms of biological role, catalyzes the ATP-dependent phosphorylation of N-acetyl-L-glutamate. This Pseudomonas putida (strain GB-1) protein is Acetylglutamate kinase.